The chain runs to 399 residues: DNA polymerase IV (399 aa).

The 183-residue stretch at 5–187 folds into the UmuC domain; that stretch reads ILHCDLNNFY…LPVEALLYVG (183 aa). Positions 9 and 105 each coordinate Mg(2+). E106 is a catalytic residue.

Belongs to the DNA polymerase type-Y family. In terms of assembly, monomer. The cofactor is Mg(2+).

It is found in the cytoplasm. It catalyses the reaction DNA(n) + a 2'-deoxyribonucleoside 5'-triphosphate = DNA(n+1) + diphosphate. Poorly processive, error-prone DNA polymerase involved in untargeted mutagenesis. Copies undamaged DNA at stalled replication forks, which arise in vivo from mismatched or misaligned primer ends. These misaligned primers can be extended by PolIV. Exhibits no 3'-5' exonuclease (proofreading) activity. May be involved in translesional synthesis, in conjunction with the beta clamp from PolIII. This is DNA polymerase IV from Acetivibrio thermocellus (strain ATCC 27405 / DSM 1237 / JCM 9322 / NBRC 103400 / NCIMB 10682 / NRRL B-4536 / VPI 7372) (Clostridium thermocellum).